The primary structure comprises 363 residues: 2,5-diketocamphane 1,2-monooxygenase 2 (363 aa).

FMN is bound by residues methionine 74 and 186 to 194 (TGLTKNSSS).

This sequence belongs to the bacterial luciferase oxidoreductase family. Homodimer. Likely forms a loose transient complex with a P.putida flavin reductase that provides the required FMNH(2) to the enzyme.

The enzyme catalyses (1R,4R)-bornane-2,5-dione + FMNH2 + O2 = (1R,4R)-5-oxo-1,2-campholide + FMN + H2O + H(+). It participates in terpene metabolism; (R)-camphor degradation. Involved in the degradation and assimilation of (+)-camphor, which allows P.putida strain NCIMB 10007 to grow on this enantiomer of camphor as the sole carbon source. Catalyzes the FMNH(2)-dependent lactonization of 2,5-diketocamphane via a Baeyer-Villiger oxidation to produce the unstable lactone 5-oxo-1,2-campholide with (R,R) configuration, that presumably undergoes spontaneous hydrolysis to form 2-oxo-Delta(3)-4,5,5-trimethylcyclopentenylacetate. Is also able to convert (+)-camphor and norcamphor to the corresponding lactone in vitro. Shows no conversion of (-)-camphor, (+)-fenchone, (-)-fenchone, and (+)-nopinone. Acts on other bicyclic ketones and, to a lesser extent, on some 2- and 4-substituted monocyclic ketones. This is 2,5-diketocamphane 1,2-monooxygenase 2 from Pseudomonas putida (Arthrobacter siderocapsulatus).